Reading from the N-terminus, the 650-residue chain is Chaperone protein DnaK (650 aa).

T200 is modified (phosphothreonine; by autocatalysis). Positions 611–636 (AQQAGAAGAAGAAAEGASAQGGAQPA) are enriched in low complexity. The segment at 611 to 650 (AQQAGAAGAAGAAAEGASAQGGAQPADDVVDADFKEVKKD) is disordered.

The protein belongs to the heat shock protein 70 family.

Acts as a chaperone. The polypeptide is Chaperone protein DnaK (Burkholderia mallei (strain NCTC 10247)).